A 267-amino-acid chain; its full sequence is Tryptophan synthase alpha chain (267 aa).

Residues E49 and D60 each act as proton acceptor in the active site.

This sequence belongs to the TrpA family. In terms of assembly, tetramer of two alpha and two beta chains.

The enzyme catalyses (1S,2R)-1-C-(indol-3-yl)glycerol 3-phosphate + L-serine = D-glyceraldehyde 3-phosphate + L-tryptophan + H2O. It participates in amino-acid biosynthesis; L-tryptophan biosynthesis; L-tryptophan from chorismate: step 5/5. The alpha subunit is responsible for the aldol cleavage of indoleglycerol phosphate to indole and glyceraldehyde 3-phosphate. The polypeptide is Tryptophan synthase alpha chain (Acinetobacter baumannii (strain AB307-0294)).